Consider the following 483-residue polypeptide: 1-aminocyclopropane-1-carboxylate synthase 2 (483 aa).

Lys-275 is subject to N6-(pyridoxal phosphate)lysine.

This sequence belongs to the class-I pyridoxal-phosphate-dependent aminotransferase family. The cofactor is pyridoxal 5'-phosphate.

The catalysed reaction is S-adenosyl-L-methionine = 1-aminocyclopropane-1-carboxylate + S-methyl-5'-thioadenosine + H(+). Its pathway is alkene biosynthesis; ethylene biosynthesis via S-adenosyl-L-methionine; ethylene from S-adenosyl-L-methionine: step 1/2. Catalyzes the formation of 1-aminocyclopropane-1-carboxylate, a direct precursor of ethylene in higher plants. Involved in defense response by producing ethylene after pathogen infection. Involved in several phosphate deficiency-induced adaptive responses, such as lateral root elongation. This Oryza sativa subsp. japonica (Rice) protein is 1-aminocyclopropane-1-carboxylate synthase 2.